A 93-amino-acid chain; its full sequence is Large ribosomal subunit protein uL23 (93 aa).

The protein belongs to the universal ribosomal protein uL23 family. In terms of assembly, part of the 50S ribosomal subunit. Contacts protein L29, and trigger factor when it is bound to the ribosome.

Its function is as follows. One of the early assembly proteins it binds 23S rRNA. One of the proteins that surrounds the polypeptide exit tunnel on the outside of the ribosome. Forms the main docking site for trigger factor binding to the ribosome. This chain is Large ribosomal subunit protein uL23, found in Sulfurovum sp. (strain NBC37-1).